A 464-amino-acid polypeptide reads, in one-letter code: Fumarate hydratase class II (464 aa).

Substrate contacts are provided by residues 96–98 (SGT), 127–130 (HPND), 137–139 (SSN), and threonine 185. Residue histidine 186 is the Proton donor/acceptor of the active site. The active site involves serine 316. Substrate contacts are provided by residues serine 317 and 322 to 324 (KVN).

This sequence belongs to the class-II fumarase/aspartase family. Fumarase subfamily. In terms of assembly, homotetramer.

Its subcellular location is the cytoplasm. It catalyses the reaction (S)-malate = fumarate + H2O. It participates in carbohydrate metabolism; tricarboxylic acid cycle; (S)-malate from fumarate: step 1/1. Functionally, involved in the TCA cycle. Catalyzes the stereospecific interconversion of fumarate to L-malate. This Pseudomonas putida (strain ATCC 47054 / DSM 6125 / CFBP 8728 / NCIMB 11950 / KT2440) protein is Fumarate hydratase class II.